The primary structure comprises 213 residues: MLIIILLLIASYLLGAIPFGLWIGKIFFKKNLHDYGSGNTGTTNTFRILGVKAGIAVFIFDLLKGTLATLLPLIFHINGVSPLIFGLLAVIGHTLSIFDHFKGGKAVATSAGVVLGFSPFFLLYLLVIFILVLWLFSMISLSSVVAAIFALLGILIFPSFGFILTSYDLLFSIIIFALAIIIIFRHKTNLKRIKNHCESLVPFGLNLSRQKEK.

The next 6 helical transmembrane spans lie at 3–23 (IIIL…GLWI), 48–68 (ILGV…GTLA), 71–91 (LPLI…LAVI), 119–139 (PFFL…FSMI), 144–164 (VVAA…GFIL), and 165–185 (TSYD…IIFR).

Belongs to the PlsY family. As to quaternary structure, probably interacts with PlsX.

It localises to the cell membrane. It catalyses the reaction an acyl phosphate + sn-glycerol 3-phosphate = a 1-acyl-sn-glycero-3-phosphate + phosphate. Its pathway is lipid metabolism; phospholipid metabolism. Functionally, catalyzes the transfer of an acyl group from acyl-phosphate (acyl-PO(4)) to glycerol-3-phosphate (G3P) to form lysophosphatidic acid (LPA). This enzyme utilizes acyl-phosphate as fatty acyl donor, but not acyl-CoA or acyl-ACP. The polypeptide is Glycerol-3-phosphate acyltransferase (Lactococcus lactis subsp. cremoris (strain MG1363)).